The following is a 338-amino-acid chain: Ribosomal RNA small subunit methyltransferase C (338 aa).

Belongs to the methyltransferase superfamily. RsmC family. In terms of assembly, monomer.

It localises to the cytoplasm. The enzyme catalyses guanosine(1207) in 16S rRNA + S-adenosyl-L-methionine = N(2)-methylguanosine(1207) in 16S rRNA + S-adenosyl-L-homocysteine + H(+). Functionally, specifically methylates the guanine in position 1207 of 16S rRNA in the 30S particle. The polypeptide is Ribosomal RNA small subunit methyltransferase C (Acinetobacter baylyi (strain ATCC 33305 / BD413 / ADP1)).